Consider the following 308-residue polypeptide: 26S proteasome regulatory subunit rpn11 (308 aa).

In terms of domain architecture, MPN spans 30 to 165 (VYISSLALLK…IDAFRLINPS (136 aa)). Residues H112, H114, and D125 each contribute to the Zn(2+) site. The JAMM motif signature appears at 112–125 (HSHPGFGCWLSSVD).

This sequence belongs to the peptidase M67A family. In terms of assembly, the 26S proteasome is composed of a core protease, known as the 20S proteasome, capped at one or both ends by the 19S regulatory complex (RC). The RC is composed of at least 18 different subunits in two subcomplexes, the base and the lid, which form the portions proximal and distal to the 20S proteolytic core, respectively.

Functionally, acts as a regulatory subunit of the 26 proteasome which is involved in the ATP-dependent degradation of ubiquitinated proteins. Its function is as follows. Transcription factor pap1 is controlled by the functional interaction between the positive regulator pad1 and negative regulator crm1. Both these proteins are also essential for cell viability and for the maintenance of chromosome structure. Pad1 is also responsible for resistance to staurosporine, and other drugs such as cycloheximide and caffeine. The protein is 26S proteasome regulatory subunit rpn11 (rpn11) of Schizosaccharomyces pombe (strain 972 / ATCC 24843) (Fission yeast).